The sequence spans 360 residues: Carbamoyl phosphate synthase small chain (360 aa).

A CPSase region spans residues 1–169 (MTKRLLILED…TKTAYPAPGI (169 aa)). The L-glutamine site is built by Ser46, Gly220, and Gly222. The Glutamine amidotransferase type-1 domain maps to 172–358 (NIVLVDFGLK…LEMIDSWRCT (187 aa)). Cys247 functions as the Nucleophile in the catalytic mechanism. 5 residues coordinate L-glutamine: Met248, Gln251, Asn289, Gly291, and Tyr292. Catalysis depends on residues His331 and Asp333.

It belongs to the CarA family. Composed of two chains; the small (or glutamine) chain promotes the hydrolysis of glutamine to ammonia, which is used by the large (or ammonia) chain to synthesize carbamoyl phosphate. Tetramer of heterodimers (alpha,beta)4.

The enzyme catalyses hydrogencarbonate + L-glutamine + 2 ATP + H2O = carbamoyl phosphate + L-glutamate + 2 ADP + phosphate + 2 H(+). It carries out the reaction L-glutamine + H2O = L-glutamate + NH4(+). It functions in the pathway amino-acid biosynthesis; L-arginine biosynthesis; carbamoyl phosphate from bicarbonate: step 1/1. The protein operates within pyrimidine metabolism; UMP biosynthesis via de novo pathway; (S)-dihydroorotate from bicarbonate: step 1/3. In terms of biological role, small subunit of the glutamine-dependent carbamoyl phosphate synthetase (CPSase). CPSase catalyzes the formation of carbamoyl phosphate from the ammonia moiety of glutamine, carbonate, and phosphate donated by ATP, constituting the first step of 2 biosynthetic pathways, one leading to arginine and/or urea and the other to pyrimidine nucleotides. The small subunit (glutamine amidotransferase) binds and cleaves glutamine to supply the large subunit with the substrate ammonia. The sequence is that of Carbamoyl phosphate synthase small chain from Streptococcus pyogenes serotype M18 (strain MGAS8232).